Consider the following 571-residue polypeptide: Dehydrocurvularin exporter (571 aa).

Positions 1–34 (MADGSDLENNHKPELDRSQPGSTSNGSQEQKDPD) are disordered. A compositionally biased stretch (basic and acidic residues) spans 8-17 (ENNHKPELDR). Residues 19–28 (QPGSTSNGSQ) are compositionally biased toward polar residues. Residue Asn25 is glycosylated (N-linked (GlcNAc...) asparagine). A run of 14 helical transmembrane segments spans residues 47–67 (ILVM…IGII), 86–106 (WYGS…GKLF), 120–140 (FIFL…SVII), 143–163 (AIQG…INYV), 171–191 (LLIG…PVIG), 202–222 (WCFW…LLFL), 238–258 (IILA…VCLT), 275–295 (VIAT…TEWF), 317–337 (LFCL…PIYF), 350–370 (VNTL…GGVI), 379–399 (FELL…ILDV), 405–425 (MYIG…QIPM), 443–463 (IMVM…QSLF), and 514–534 (VFAF…IIPF). The disordered stretch occupies residues 538-571 (PDHGKKDKPATEEAAEEKSEAEGKVSGDKEENHS).

The protein belongs to the major facilitator superfamily. TCR/Tet family.

Its subcellular location is the cell membrane. Efflux pump that is probably involved in the export of dehydrocurvularin. The chain is Dehydrocurvularin exporter from Aspergillus terreus.